Reading from the N-terminus, the 305-residue chain is RxLR effector protein 17 (305 aa).

An N-terminal signal peptide occupies residues 1-24; sequence MQSILWFALIASVVFLVLVDLASG. Residues 45-60 carry the RxLR-dEER motif; it reads RLLRAAHLDRKLSEER. N-linked (GlcNAc...) asparagine glycans are attached at residues asparagine 207 and asparagine 227. Residues 247–269 are w motif; that stretch reads LHLKWAVEAKSPKDVVERILKDL.

The protein belongs to the RxLR effector family. Interacts with host A.thaliana At1G14340.

Its subcellular location is the secreted. The protein localises to the host cell membrane. Functionally, secreted effector that confers enhanced plant susceptibility during both compatible and incompatible interactions between the pathogen and its host. Promotes the sexual reproduction of the pathogen in the plant host. The sequence is that of RxLR effector protein 17 from Hyaloperonospora arabidopsidis (strain Emoy2) (Downy mildew agent).